We begin with the raw amino-acid sequence, 249 residues long: Probable amino-acid import ATP-binding protein YxeO (249 aa).

The 238-residue stretch at 2–239 folds into the ABC transporter domain; the sequence is ITVKNIRKAF…PKNERTKRFI (238 aa). 34–41 is a binding site for ATP; that stretch reads GPSGSGKS.

The protein belongs to the ABC transporter superfamily. In terms of assembly, the complex is composed of two ATP-binding proteins (YxeO), two transmembrane proteins (YxeN) and a solute-binding protein (YxeM).

The protein resides in the cell membrane. In terms of biological role, probably part of the ABC transporter complex YxeMNO that could be involved in amino-acid import. May transport S-methylcysteine. Responsible for energy coupling to the transport system. This chain is Probable amino-acid import ATP-binding protein YxeO (yxeO), found in Bacillus subtilis (strain 168).